The following is a 473-amino-acid chain: DNA (cytosine-5)-methyltransferase DRM1A (473 aa).

One can recognise a UBA 1 domain in the interval 20-61; that stretch reads SAPSALVAYFLGMGFSREMVFRAIKEIGDTDSEQILELLLTY. Residues 84 to 101 show a composition bias toward acidic residues; sequence EEEDEEEDVNWDEDDTVD. Residues 84 to 115 are disordered; the sequence is EEEDEEEDVNWDEDDTVDNFDRATYSDGSGDE. The region spanning 120–140 is the UBA 2 domain; that stretch reads EMSEKDEKIKSLVSMGFPEDE. An SAM-dependent MTase DRM-type domain is found at 204–431; it reads VHRNLPDQAL…DSVKTIMASI (228 aa).

This sequence belongs to the class I-like SAM-binding methyltransferase superfamily. DRM-methyltransferase family.

Its subcellular location is the nucleus. The catalysed reaction is a 2'-deoxycytidine in DNA + S-adenosyl-L-methionine = a 5-methyl-2'-deoxycytidine in DNA + S-adenosyl-L-homocysteine + H(+). In terms of biological role, involved in de novo DNA methylation. Involved in RNA-directed DNA methylation (RdDM). This Oryza sativa subsp. japonica (Rice) protein is DNA (cytosine-5)-methyltransferase DRM1A.